The primary structure comprises 354 residues: MGSGISAEDKELARRSKELEKKLQEDADKEAKTVKLLLLGAGESGKSTIVKQMKIIHQDGYSPEECLEFKSVIYGNVLQSILAIIRAMSTLGIDYAEPSCADAGRQLNNLADSTEEGTMPPELVDVIRKLWKDGGVQACFDRAAEFQLNDSASYYLNQLDRITDPNYLPNEQDVLRSRVKTTGIIETKFSVKDLNFRMFDVGGQRSERKKWIHCFEGVTCIIFCAALSAYDMVLVEDDEVNRMHESLHLFNSICNHKFFAATSIVLFLNKKDLFEEKIKKVHLSICFPEYDGNNSYEDAGNYIKSQFLDLNMRKDVKEIYSHMTCATDTQNVKFVFDAVTDIIIKENLKDCGLF.

The tract at residues Met-1–Asp-28 is disordered. Gly-2 carries the N-myristoyl glycine lipid modification. Basic and acidic residues predominate over residues Ala-7–Asp-28. The region spanning Lys-32 to Phe-354 is the G-alpha domain. A G1 motif region spans residues Lys-35–Thr-48. Residues Gly-40–Ser-47, Leu-175–Thr-181, Asp-200–Gln-204, Asn-269–Asp-272, and Ala-326 each bind GTP. Ser-47 and Thr-181 together coordinate Mg(2+). Residues Asp-173 to Thr-181 form a G2 motif region. The tract at residues Phe-196 to Arg-205 is G3 motif. The segment at Val-265 to Asp-272 is G4 motif. Residues Thr-324–Thr-329 are G5 motif.

This sequence belongs to the G-alpha family. G(i/o/t/z) subfamily. In terms of assembly, g proteins are composed of 3 units; alpha, beta and gamma. The alpha chain contains the guanine nucleotide binding site. In the retina, expressed in the rod photoreceptors.

Its subcellular location is the cell projection. The protein resides in the cilium. It localises to the photoreceptor outer segment. It is found in the photoreceptor inner segment. Guanine nucleotide-binding proteins (G proteins) are involved as modulators or transducers in various transmembrane signaling systems. Transducin is an amplifier and one of the transducers of a visual impulse that performs the coupling between rhodopsin and cGMP-phosphodiesterase. In Mus musculus (Mouse), this protein is Guanine nucleotide-binding protein G(t) subunit alpha-2 (Gnat2).